A 240-amino-acid chain; its full sequence is tRNA (guanine-N(7)-)-methyltransferase (240 aa).

Residues 1-20 form a disordered region; it reads MTESHDTPITPDGEARPHRR. Positions 70, 95, 122, and 145 each coordinate S-adenosyl-L-methionine. The active site involves D145. Substrate contacts are provided by residues K149, D181, and 218–221; that span reads TKFE.

It belongs to the class I-like SAM-binding methyltransferase superfamily. TrmB family.

It carries out the reaction guanosine(46) in tRNA + S-adenosyl-L-methionine = N(7)-methylguanosine(46) in tRNA + S-adenosyl-L-homocysteine. It functions in the pathway tRNA modification; N(7)-methylguanine-tRNA biosynthesis. In terms of biological role, catalyzes the formation of N(7)-methylguanine at position 46 (m7G46) in tRNA. The polypeptide is tRNA (guanine-N(7)-)-methyltransferase (Pseudomonas putida (strain ATCC 47054 / DSM 6125 / CFBP 8728 / NCIMB 11950 / KT2440)).